Here is a 200-residue protein sequence, read N- to C-terminus: Large ribosomal subunit protein uL4 (200 aa).

The tract at residues 42 to 65 (TRAQKTRSEVSGGGAKPWRQKGTG) is disordered.

The protein belongs to the universal ribosomal protein uL4 family. In terms of assembly, part of the 50S ribosomal subunit.

Functionally, one of the primary rRNA binding proteins, this protein initially binds near the 5'-end of the 23S rRNA. It is important during the early stages of 50S assembly. It makes multiple contacts with different domains of the 23S rRNA in the assembled 50S subunit and ribosome. Forms part of the polypeptide exit tunnel. This chain is Large ribosomal subunit protein uL4, found in Vibrio vulnificus (strain CMCP6).